Here is a 108-residue protein sequence, read N- to C-terminus: MIVVTTDFVPGYEIVETLGIVTGSIVNSKHLGKDIAAAFKTLAGGEIKSYTELLVESRNIALKRMIDEAEKLGADAVIGLRFGSSSVMQSAAEILAYGTAVKLRKLSE.

Belongs to the UPF0145 family.

The chain is UPF0145 protein Fnod_0426 from Fervidobacterium nodosum (strain ATCC 35602 / DSM 5306 / Rt17-B1).